A 91-amino-acid chain; its full sequence is DNA-directed RNA polymerase subunit omega (91 aa).

This sequence belongs to the RNA polymerase subunit omega family. As to quaternary structure, the RNAP catalytic core consists of 2 alpha, 1 beta, 1 beta' and 1 omega subunit. When a sigma factor is associated with the core the holoenzyme is formed, which can initiate transcription.

It carries out the reaction RNA(n) + a ribonucleoside 5'-triphosphate = RNA(n+1) + diphosphate. Functionally, promotes RNA polymerase assembly. Latches the N- and C-terminal regions of the beta' subunit thereby facilitating its interaction with the beta and alpha subunits. The chain is DNA-directed RNA polymerase subunit omega from Pectobacterium atrosepticum (strain SCRI 1043 / ATCC BAA-672) (Erwinia carotovora subsp. atroseptica).